The chain runs to 884 residues: E3 ubiquitin-protein ligase BRE1-like 1 (884 aa).

The segment at 1–37 (MGSTGEPDRKRRLSSSVAPGGGAPVSPAKRLAVAPTS) is disordered. The stretch at 49-86 (YKNQKLSEQLEAHKFEYRALENKFAGLKEKQRTHNETL) forms a coiled coil. The tract at residues 107-127 (KSGSPNSSPGSGHNNVQKDGT) is disordered. Residues 108-121 (SGSPNSSPGSGHNN) show a composition bias toward low complexity. Coiled coils occupy residues 216–541 (LNNV…ELKL), 580–663 (SKLE…LQQI), 696–762 (RNLQ…QSLD), and 789–827 (KKRI…KEYR). The segment at 832–871 (CGICHDRQKEVVITKCYHLFCNQCIQKSLGNRQRRCPSCS) adopts an RING-type zinc-finger fold.

This sequence belongs to the BRE1 family.

It localises to the nucleus. It carries out the reaction S-ubiquitinyl-[E2 ubiquitin-conjugating enzyme]-L-cysteine + [acceptor protein]-L-lysine = [E2 ubiquitin-conjugating enzyme]-L-cysteine + N(6)-ubiquitinyl-[acceptor protein]-L-lysine.. It participates in protein modification; protein ubiquitination. Its function is as follows. E3 ubiquitin-protein ligase that monoubiquitinates H2B to form H2BK143ub1. H2BK143ub1 gives a specific tag for epigenetic transcriptional activation and is also prerequisite for H3K4me and maybe H3K79me. It thereby plays a central role in histone code and gene regulation. Forms a ubiquitin ligase complex in cooperation with the E2 enzyme UBC2/RAD6. This Oryza sativa subsp. indica (Rice) protein is E3 ubiquitin-protein ligase BRE1-like 1 (BRE1A).